The following is a 380-amino-acid chain: 1-deoxy-D-xylulose 5-phosphate reductoisomerase 2 (380 aa).

The NADPH site is built by Ser-10, Gly-11, Ser-12, Ile-13, Gly-36, Lys-37, Asn-38, and Asn-120. A 1-deoxy-D-xylulose 5-phosphate-binding site is contributed by Lys-121. Glu-122 contributes to the NADPH binding site. Asp-146 serves as a coordination point for Mn(2+). Ser-147, Glu-148, Ser-172, and His-195 together coordinate 1-deoxy-D-xylulose 5-phosphate. Glu-148 is a binding site for Mn(2+). Gly-201 lines the NADPH pocket. 1-deoxy-D-xylulose 5-phosphate-binding residues include Ser-208, Asn-213, Lys-214, and Glu-217. Glu-217 is a binding site for Mn(2+).

The protein belongs to the DXR family. The cofactor is Mg(2+). Requires Mn(2+) as cofactor.

It catalyses the reaction 2-C-methyl-D-erythritol 4-phosphate + NADP(+) = 1-deoxy-D-xylulose 5-phosphate + NADPH + H(+). Its pathway is isoprenoid biosynthesis; isopentenyl diphosphate biosynthesis via DXP pathway; isopentenyl diphosphate from 1-deoxy-D-xylulose 5-phosphate: step 1/6. Functionally, catalyzes the NADPH-dependent rearrangement and reduction of 1-deoxy-D-xylulose-5-phosphate (DXP) to 2-C-methyl-D-erythritol 4-phosphate (MEP). This is 1-deoxy-D-xylulose 5-phosphate reductoisomerase 2 from Bacillus anthracis.